The sequence spans 455 residues: UDP-N-acetylmuramoylalanine--D-glutamate ligase (455 aa).

119–125 contacts ATP; it reads GTNGKTT.

Belongs to the MurCDEF family.

It is found in the cytoplasm. It catalyses the reaction UDP-N-acetyl-alpha-D-muramoyl-L-alanine + D-glutamate + ATP = UDP-N-acetyl-alpha-D-muramoyl-L-alanyl-D-glutamate + ADP + phosphate + H(+). It functions in the pathway cell wall biogenesis; peptidoglycan biosynthesis. Its function is as follows. Cell wall formation. Catalyzes the addition of glutamate to the nucleotide precursor UDP-N-acetylmuramoyl-L-alanine (UMA). The sequence is that of UDP-N-acetylmuramoylalanine--D-glutamate ligase from Listeria monocytogenes serovar 1/2a (strain ATCC BAA-679 / EGD-e).